An 832-amino-acid polypeptide reads, in one-letter code: Cadherin-17 (832 aa).

Residues 1-22 form the signal peptide; that stretch reads MILQAHLHSLCLLMLYLATGYG. Residues 23–787 are Extracellular-facing; the sequence is QEGKFSGPLK…HQTGIPTVGM (765 aa). Cadherin domains lie at 30-128, 129-244, 245-340, 341-449, 450-566, 567-667, and 668-777; these read PLKP…TFLQ, SKYE…APKP, VEMV…PPTC, PSPV…IPIF, EKSD…APQF, SQHV…PPRL, and AKDY…RPAG. Residues asparagine 149, asparagine 184, asparagine 250, asparagine 419, asparagine 456, asparagine 546, asparagine 587, and asparagine 722 are each glycosylated (N-linked (GlcNAc...) asparagine). Residues 788 to 808 form a helical membrane-spanning segment; the sequence is AVGILLTTLLVIGIILAVVFI. Residues 809–832 are Cytoplasmic-facing; it reads RIKKDKGKDNVESAQASEVKPLRS.

In terms of tissue distribution, expressed in the gastrointestinal tract and pancreatic duct. Not detected in kidney, lung, liver, brain, adrenal gland and skin.

The protein resides in the cell membrane. In terms of biological role, cadherins are calcium-dependent cell adhesion proteins. They preferentially interact with themselves in a homophilic manner in connecting cells; cadherins may thus contribute to the sorting of heterogeneous cell types. LI-cadherin may have a role in the morphological organization of liver and intestine. Involved in intestinal peptide transport. This chain is Cadherin-17 (CDH17), found in Homo sapiens (Human).